The sequence spans 522 residues: MSISSDEVNFLVYRYLQESGFSHSAFTFGIESHISQSNINGALVPPAALISIIQKGLQYVEAEVSINEDGTLFDGRPIESLSLIDAVMPDVVQTRQQAYRDKLAQQQQAAAAAAAAAAAAAATSANNQQPPAKNGESTANGEENGGHALANNHTDMMEVDGDVEIPPSKAVVLRGHESEVFICAWNPVSDLLASGSGDSTARIWNLSENSTSGSTQLVLRHCIREGGQDVPSNKDVTSLDWNSEGTLLATGSYDGFARIWTKDGNLASTLGQHKGPIFALKWNKKGNFILSAGVDKTTIIWDAHTGEAKQQFPFHSAPALDVDWQSNNTFASCSTDMCIHVCKLGQDRPIKTFQGHTNEVNAIKWDPTGNLLASCSDDMTLKIWSMKHDTCVHDLQAHNKEIYTIKWSPTGPGTNNPNANLMLASASFDSTVRLWDVDRGICIHTLTKHQEPVYSVAFSPDGRYLASGSFDKCVHIWNTQTGALVHSYRGTGGIFEVCWNAAGDKVGASASDGSVCVLDLRK.

Positions 4-36 constitute a LisH domain; sequence SSDEVNFLVYRYLQESGFSHSAFTFGIESHISQ. One can recognise an F-box-like domain in the interval 41 to 86; sequence GALVPPAALISIIQKGLQYVEAEVSINEDGTLFDGRPIESLSLIDA. Positions 122 to 150 are disordered; the sequence is ATSANNQQPPAKNGESTANGEENGGHALA. Over residues 123–141 the composition is skewed to polar residues; sequence TSANNQQPPAKNGESTANG. 8 WD repeats span residues 175-214, 231-270, 272-311, 314-352, 355-394, 397-445, 448-487, and 489-522; these read GHES…TSGS, PSNK…ASTL, QHKG…AKQQ, FHSA…PIKT, GHTN…CVHD, AHNK…CIHT, KHQE…LVHS, and RGTG…DLRK.

This sequence belongs to the WD repeat EBI family. As to quaternary structure, interacts with heterodimers of rxra and thrb, and this interaction is abrogated by thyroid hormone binding to thrb. Interacts with ncor1.

It is found in the nucleus. In terms of biological role, F-box-like protein which acts as an integral component of the N-CoR transcriptional corepressor complex. Probably regulates transcription activation mediated by nuclear receptors. May mediate the recruitment of the 19S proteasome complex, leading to the subsequent proteasomal degradation of the N-CoR complex, thereby allowing cofactor exchange and transcription activation. The protein is F-box-like/WD repeat-containing protein TBL1XR1-B (tbl1xr1-b) of Xenopus laevis (African clawed frog).